Consider the following 1037-residue polypeptide: Multidrug resistance protein MdtF (1037 aa).

Residues 1–9 lie on the Cytoplasmic side of the membrane; that stretch reads MANYFIDRP. A helical transmembrane segment spans residues 10 to 30; that stretch reads VFAWVLAIIMMLAGGLAIMNL. Residues 31–338 lie on the Periplasmic side of the membrane; it reads PVAQYPQIAP…TTPFIKISIQ (308 aa). A helical transmembrane segment spans residues 339–359; sequence EVFKTLVEAIILVFLVMYLFL. The Cytoplasmic portion of the chain corresponds to 360–369; the sequence is QNFRATIIPT. The chain crosses the membrane as a helical span at residues 370–390; that stretch reads IAVPVVILGTFAILSAVGFTI. The Periplasmic portion of the chain corresponds to 391–392; the sequence is NT. A helical membrane pass occupies residues 393–413; it reads LTMFGMVLAIGLLVDDAIVVV. Residues 414–440 are Cytoplasmic-facing; the sequence is ENVERVIAEDKLPPKEATHKSMGQIQR. Residues 441–461 form a helical membrane-spanning segment; it reads ALVGIAVVLSAVFMPMAFMSG. Residues 462 to 471 are Periplasmic-facing; that stretch reads ATGEIYRQFS. A helical transmembrane segment spans residues 472-492; it reads ITLISSMLLSVFVAMSLTPAL. At 493-534 the chain is on the cytoplasmic side; it reads CATILKAAPEGGHKPNALFARFNTLFEKSTQHYTDSTRSLLR. Residues 535–555 form a helical membrane-spanning segment; that stretch reads CTGRYMVVYLLICAGMAVLFL. The Periplasmic segment spans residues 556–870; sequence RTPTSFLPEE…SYQEALSSNQ (315 aa). The chain crosses the membrane as a helical span at residues 871–891; sequence APALYAISLVVVFLALAALYE. Position 892 (serine 892) is a topological domain, cytoplasmic. The helical transmembrane segment at 893–913 threads the bilayer; it reads WSIPFSVMLVVPLGVVGALLA. Over 914 to 927 the chain is Periplasmic; that stretch reads TDLRGLSNDVYFQV. The helical transmembrane segment at 928-948 threads the bilayer; it reads GLLTTIGLSAKNAILIVEFAV. Residues 949–972 lie on the Cytoplasmic side of the membrane; sequence EMMQKEGKTPVEAIIEAARMRLRP. The chain crosses the membrane as a helical span at residues 973–993; the sequence is ILMTSLAFILGVLPLVISHGA. At 994–1006 the chain is on the periplasmic side; the sequence is GSGAQNAVGTGVM. Residues 1007–1027 form a helical membrane-spanning segment; the sequence is GGMFAATVLAIYFVPVFFVVV. Over 1028–1037 the chain is Cytoplasmic; it reads EHLFARFKKA.

It belongs to the resistance-nodulation-cell division (RND) (TC 2.A.6) family. As to quaternary structure, homotrimer. Part of the tripartite efflux system MdtEF-TolC, which is composed of an inner membrane transporter, MdtF, a membrane fusion protein, MdtE, and an outer membrane component, TolC. The complex forms a large protein conduit and can translocate molecules across both the inner and outer membranes.

It localises to the cell inner membrane. Functionally, part of the tripartite efflux system MdtEF-TolC, which confers resistance to various compounds. This Escherichia coli O6:H1 (strain CFT073 / ATCC 700928 / UPEC) protein is Multidrug resistance protein MdtF (mdtF).